A 127-amino-acid polypeptide reads, in one-letter code: Large ribosomal subunit protein bL20 (127 aa).

The protein belongs to the bacterial ribosomal protein bL20 family.

Binds directly to 23S ribosomal RNA and is necessary for the in vitro assembly process of the 50S ribosomal subunit. It is not involved in the protein synthesizing functions of that subunit. In Streptomyces coelicolor (strain ATCC BAA-471 / A3(2) / M145), this protein is Large ribosomal subunit protein bL20 (rplT).